The following is a 260-amino-acid chain: Cytosolic Fe-S cluster assembly factor Nubp2 homolog (260 aa).

Residue 14–21 (GKGGVGKS) participates in ATP binding. Cysteine 188 and cysteine 191 together coordinate [4Fe-4S] cluster.

This sequence belongs to the Mrp/NBP35 ATP-binding proteins family. NUBP2/CFD1 subfamily. In terms of assembly, heterotetramer of 2 Nubp1 and 2 Nubp2 chains. It depends on [4Fe-4S] cluster as a cofactor.

Its subcellular location is the cytoplasm. Functionally, component of the cytosolic iron-sulfur (Fe/S) protein assembly (CIA) machinery. Required for maturation of extramitochondrial Fe-S proteins. The Nubp1-Nubp2 heterotetramer forms a Fe-S scaffold complex, mediating the de novo assembly of an Fe-S cluster and its transfer to target apoproteins. This chain is Cytosolic Fe-S cluster assembly factor Nubp2 homolog, found in Drosophila sechellia (Fruit fly).